The following is a 140-amino-acid chain: Ribonuclease P protein subunit p20 (140 aa).

The protein belongs to the histone-like Alba family. In terms of assembly, component of nuclear RNase P and RNase MRP complexes. RNase P consists of a catalytic RNA moiety and 10 different protein chains; POP1, POP4, POP5, POP7, RPP14, RPP21, RPP25, RPP30, RPP38 and RPP40. Within the RNase P complex, POP1, POP7 and RPP25 form the 'finger' subcomplex, POP5, RPP14, RPP40 and homodimeric RPP30 form the 'palm' subcomplex, and RPP21, POP4 and RPP38 form the 'wrist' subcomplex. All subunits of the RNase P complex interact with the catalytic RNA. Several subunits of RNase P are also part of the RNase MRP complex. RNase MRP consists of a catalytic RNA moiety and about 8 protein subunits; POP1, POP7, RPP25, RPP30, RPP38, RPP40 and possibly also POP4 and POP5. Interacts with SMN1. POP7 forms a heterodimer with RPP25 that binds to the P3 stem loop of the catalytic RNA.

The protein localises to the nucleus. It is found in the nucleolus. It localises to the cytoplasm. The protein resides in the cytoplasmic granule. In terms of biological role, component of ribonuclease P, a ribonucleoprotein complex that generates mature tRNA molecules by cleaving their 5'-ends. Also a component of the MRP ribonuclease complex, which cleaves pre-rRNA sequences. This chain is Ribonuclease P protein subunit p20 (POP7), found in Bos taurus (Bovine).